Reading from the N-terminus, the 274-residue chain is 2-dehydro-3-deoxyphosphooctonate aldolase (274 aa).

It belongs to the KdsA family.

The protein localises to the cytoplasm. It catalyses the reaction D-arabinose 5-phosphate + phosphoenolpyruvate + H2O = 3-deoxy-alpha-D-manno-2-octulosonate-8-phosphate + phosphate. Its pathway is carbohydrate biosynthesis; 3-deoxy-D-manno-octulosonate biosynthesis; 3-deoxy-D-manno-octulosonate from D-ribulose 5-phosphate: step 2/3. It functions in the pathway bacterial outer membrane biogenesis; lipopolysaccharide biosynthesis. The chain is 2-dehydro-3-deoxyphosphooctonate aldolase from Legionella pneumophila (strain Corby).